A 181-amino-acid chain; its full sequence is MSGSAVSKRYASALFDIANESAQLNQVEEELIVVKQVFQNEKALNDVLNHPKVPAAKKKELIQNAFGSLSQSVLNTIFLLIDRHRAAIVPELTDEFIKLANVARQTEDAIVYSVKPLTDAEMLPLSQVFAKKAGVASLRIRNEVQTDLIGGIKVRIGNRIYDGSVSGKLQRIERQLAGENR.

This sequence belongs to the ATPase delta chain family. As to quaternary structure, F-type ATPases have 2 components, F(1) - the catalytic core - and F(0) - the membrane proton channel. F(1) has five subunits: alpha(3), beta(3), gamma(1), delta(1), epsilon(1). F(0) has three main subunits: a(1), b(2) and c(10-14). The alpha and beta chains form an alternating ring which encloses part of the gamma chain. F(1) is attached to F(0) by a central stalk formed by the gamma and epsilon chains, while a peripheral stalk is formed by the delta and b chains. The F(1)F(0) complex interacts with SpoIIIJ and YqjG; YqgA is found in the same complex. Interacts with FloT.

The protein localises to the cell membrane. It is found in the membrane raft. Its function is as follows. F(1)F(0) ATP synthase produces ATP from ADP in the presence of a proton or sodium gradient. F-type ATPases consist of two structural domains, F(1) containing the extramembraneous catalytic core and F(0) containing the membrane proton channel, linked together by a central stalk and a peripheral stalk. During catalysis, ATP synthesis in the catalytic domain of F(1) is coupled via a rotary mechanism of the central stalk subunits to proton translocation. This protein is part of the stalk that links CF(0) to CF(1). It either transmits conformational changes from CF(0) to CF(1) or is implicated in proton conduction. This chain is ATP synthase subunit delta, found in Bacillus subtilis (strain 168).